A 129-amino-acid polypeptide reads, in one-letter code: Follitropin subunit beta (129 aa).

An N-terminal signal peptide occupies residues 1 to 20 (MKTVQFCFLFCCWKAICCNS). Disulfide bonds link C21–C69, C35–C84, C38–C122, C46–C100, C50–C102, and C105–C112. 2 N-linked (GlcNAc...) asparagine glycosylation sites follow: N25 and N42.

The protein belongs to the glycoprotein hormones subunit beta family. Heterodimer. The active follitropin is a heterodimer composed of an alpha chain/CGA shared with other hormones and a unique beta chain/FSHB shown here.

It is found in the secreted. Together with the alpha chain CGA constitutes follitropin, the follicle-stimulating hormone, and provides its biological specificity to the hormone heterodimer. Binds FSHR, a G protein-coupled receptor, on target cells to activate downstream signaling pathways. Follitropin is involved in follicle development and spermatogenesis in reproductive organs. This is Follitropin subunit beta (FSHB) from Aotus nancymaae (Ma's night monkey).